The following is a 317-amino-acid chain: ADIPOR-like receptor IZH2 (317 aa).

At 1–78 (MSTLLERTKS…TFKSLFYLHN (78 aa)) the chain is on the cytoplasmic side. A helical membrane pass occupies residues 79-99 (ESVNIYSHLIPALGFFTVLLL). The Extracellular segment spans residues 100 to 110 (DKSTIKVFATT). A helical transmembrane segment spans residues 111 to 131 (TWLDHMVIDLFYSGAFACLIL). The Cytoplasmic segment spans residues 132–153 (SSSFHCLKSHSLRIATLGNKLD). Residues 154–174 (YLGICILIVTSMVSILYYGYF) traverse the membrane as a helical segment. Over 175–176 (EK) the chain is Extracellular. A helical membrane pass occupies residues 177–197 (FSLFCLFALITVSFGIACSIV). Topologically, residues 198–212 (SLKDKFRKREWRPYR) are cytoplasmic. Residues 213–233 (AGLFVCFGLSSIIPIFSGLYC) form a helical membrane-spanning segment. Residues 234-242 (YSFSEIWTQ) lie on the Extracellular side of the membrane. A helical membrane pass occupies residues 243-263 (IQLFWVLLGGVLYIIGAVLYG). The Cytoplasmic segment spans residues 264 to 276 (MRFPEKICPGKFD). Residues 277–297 (IWGHSHQLFHFLVVIAALCHL) form a helical membrane-spanning segment. At 298-317 (RGLLNSYELVHIKMENGIVS) the chain is on the extracellular side.

Belongs to the ADIPOR family.

The protein resides in the membrane. Functionally, probable receptor, which is involved in metabolic pathways that regulate lipid metabolism such as fatty acid oxidation. This Saccharomyces cerevisiae (strain ATCC 204508 / S288c) (Baker's yeast) protein is ADIPOR-like receptor IZH2 (IZH2).